The following is a 637-amino-acid chain: Acetolactate synthase 2, chloroplastic (637 aa).

The transit peptide at 1–73 directs the protein to the chloroplast; sequence MASFSFFGTI…SSKYAPNVPR (73 aa). The segment at 35-69 is disordered; the sequence is RRATRVSVSANSKKDQDRTASRRENPSTFSSKYAP. A compositionally biased stretch (basic and acidic residues) spans 46–59; it reads SKKDQDRTASRREN. Glu120 contacts thiamine diphosphate. FAD contacts are provided by residues Arg222, 329–350, and 372–391; these read HGTVYANYAVEYSDLLLAFGVR and DIDSTEIGKNKTPHVSVCCD. Positions 462 to 542 are thiamine pyrophosphate binding; the sequence is QHQMWAAQFY…VKVLLINNQH (81 aa). The Mg(2+) site is built by Asp513 and Asn540.

Belongs to the TPP enzyme family. The cofactor is Mg(2+). Requires thiamine diphosphate as cofactor.

It is found in the plastid. The protein resides in the chloroplast. It carries out the reaction 2 pyruvate + H(+) = (2S)-2-acetolactate + CO2. It participates in amino-acid biosynthesis; L-isoleucine biosynthesis; L-isoleucine from 2-oxobutanoate: step 1/4. The protein operates within amino-acid biosynthesis; L-valine biosynthesis; L-valine from pyruvate: step 1/4. In Brassica napus (Rape), this protein is Acetolactate synthase 2, chloroplastic.